The primary structure comprises 179 residues: Photosystem I assembly protein Ycf3 (179 aa).

3 TPR repeats span residues 29 to 62, 66 to 99, and 126 to 159; these read AFSY…EEDP, SYTL…NSNL, and NLEI…APDN.

The protein belongs to the Ycf3 family.

It is found in the plastid. The protein resides in the chloroplast thylakoid membrane. Essential for the assembly of the photosystem I (PSI) complex. May act as a chaperone-like factor to guide the assembly of the PSI subunits. The polypeptide is Photosystem I assembly protein Ycf3 (Trieres chinensis (Marine centric diatom)).